Consider the following 572-residue polypeptide: Chaperonin CPN60-like 2, mitochondrial (572 aa).

The transit peptide at 1-31 directs the protein to the mitochondrion; sequence MYRVLSKLSSSIGSSTSRKLVSGRIISSRNY.

It belongs to the chaperonin (HSP60) family.

Its subcellular location is the mitochondrion. In terms of biological role, implicated in mitochondrial protein import and macromolecular assembly. May facilitate the correct folding of imported proteins. May also prevent misfolding and promote the refolding and proper assembly of unfolded polypeptides generated under stress conditions in the mitochondrial matrix. The polypeptide is Chaperonin CPN60-like 2, mitochondrial (Arabidopsis thaliana (Mouse-ear cress)).